The chain runs to 185 residues: Small ribosomal subunit protein bS6 (185 aa).

Basic and acidic residues predominate over residues 115–141; sequence AAQKAAAEKAEAARLEAEKAAEEEAAK. Positions 115–185 are disordered; that stretch reads AAQKAAAEKA…EEPKSDEEDA (71 aa). The segment covering 142 to 169 has biased composition (low complexity); the sequence is AAEAQAKEAPAAEAPAEEAPAAEAPAEA. The segment covering 170-185 has biased composition (acidic residues); it reads PAEEPAEEPKSDEEDA.

Belongs to the bacterial ribosomal protein bS6 family.

Its function is as follows. Binds together with bS18 to 16S ribosomal RNA. The sequence is that of Small ribosomal subunit protein bS6 from Desulfatibacillum aliphaticivorans.